Consider the following 313-residue polypeptide: Putative HTH-type transcriptional regulatory protein Msm_0453 (313 aa).

Positions isoleucine 131 to leucine 189 constitute an HTH cro/C1-type domain. The segment at residues leucine 142–asparagine 161 is a DNA-binding region (H-T-H motif).

This Methanobrevibacter smithii (strain ATCC 35061 / DSM 861 / OCM 144 / PS) protein is Putative HTH-type transcriptional regulatory protein Msm_0453.